A 163-amino-acid chain; its full sequence is NADH-quinone oxidoreductase subunit I (163 aa).

4Fe-4S ferredoxin-type domains are found at residues 53–83 and 94–123; these read LRRYPNGEERCIACKLCEAICPAQAITIEAG and VRYDIDMVKCIYCGFCQEACPVDAIVEGPN. Cys-63, Cys-66, Cys-69, Cys-73, Cys-103, Cys-106, Cys-109, and Cys-113 together coordinate [4Fe-4S] cluster.

It belongs to the complex I 23 kDa subunit family. As to quaternary structure, NDH-1 is composed of 14 different subunits. Subunits NuoA, H, J, K, L, M, N constitute the membrane sector of the complex. [4Fe-4S] cluster serves as cofactor.

The protein resides in the cell inner membrane. The enzyme catalyses a quinone + NADH + 5 H(+)(in) = a quinol + NAD(+) + 4 H(+)(out). In terms of biological role, NDH-1 shuttles electrons from NADH, via FMN and iron-sulfur (Fe-S) centers, to quinones in the respiratory chain. The immediate electron acceptor for the enzyme in this species is believed to be ubiquinone. Couples the redox reaction to proton translocation (for every two electrons transferred, four hydrogen ions are translocated across the cytoplasmic membrane), and thus conserves the redox energy in a proton gradient. This chain is NADH-quinone oxidoreductase subunit I, found in Brucella anthropi (strain ATCC 49188 / DSM 6882 / CCUG 24695 / JCM 21032 / LMG 3331 / NBRC 15819 / NCTC 12168 / Alc 37) (Ochrobactrum anthropi).